The sequence spans 1024 residues: MTMITDSLAVVLQRRDWENPGVTQLNRLAAHPPFASWRNSEEARTDRPSQQLRSLNGEWQFVWFPAPEAVPESWLECDLPDADTVVVPSNWQMHGYDAPIYTNVTYPITVNPPFVPAENPTGCYSLTFNIDECWLQEGQTRIIFDGVNSAFHLWCNGRWVGYGQDSRLPSEFDLSAFLRAGKNRLAVMVLRWSDGSYLEDQDMWRMSGIFRDVSLLHKPTTQISDFHVATRFNDDFSRAVLEAEVQMYGELRDELRVTVSLWQGETQVASGTAPFGGEIIDERGGYADRVTLRLNVENPALWSAEIPNIYRAVVELHTADGTLIEAEACDVGFREVRIENGLLLLNGKPLLIRGVNRHEHHPLHGQVMDEQTMVQDILLMKQNNFNAVRCSHYPNHPLWYTLCDRYGLYVVDEANIETHGMVPMNRLTDDPRWLPAMSERVTRMVLRDRNHPSVIIWSLGNESGHGANHDALYRWIKSVDPSRPVQYEGGGADTTATDIICPMYARVDEDQPFPAVPKWSIKKWLSLPGELRPLILCEYAHAMGNSLGGFAKYWQAFRQYPRLQGGFVWDWVDQSLIKYDENGNPWSAYGGDFGDTPNDRQFCMNGLVFADRTPHPALTEAKHQQQFFQFRLSGRTIEVTSEYLFRHSDNELLHWTVALDGKPLASGEVPLDVAPQGKQVIELPELPQPESAGQLWLTVHVVQPNATAWSEAGHISAWQQWRLAENLSVTLPTASHAIPHLTTSEMDFCIELGNKRWQFNRQSGFLSQMWIGDEKQLLTPLRDQFTRAPLDNDIGVSEATRIDPNAWVERWKAAGHYQAEAALLQCTADTLADAVLITTAHAWQHQGKTLFISRKTYRIDGSGQMAITVDVEVASDTPHPARIGLTCQLAQVAERVNWLGLGPQENYPDRLTAACFDRWDLPLSDMYTPYVFPSENGLRCGTRELNYGPHQWRGDFQFNISRYSQQQLMETSHRHLLHAEEGTWLNIDGFHMGIGGDDSWSPSVSAEFQLSAGRYHYQLVWCQK.

Positions 103 and 202 each coordinate substrate. Residue Asp202 participates in Na(+) binding. Positions 417, 419, and 462 each coordinate Mg(2+). Residues Glu462 and 538 to 541 (EYAH) each bind substrate. Glu462 (proton donor) is an active-site residue. The active-site Nucleophile is the Glu538. Residue Asn598 participates in Mg(2+) binding. Residues Phe602 and Asn605 each contribute to the Na(+) site. The substrate site is built by Asn605 and Trp1000.

This sequence belongs to the glycosyl hydrolase 2 family. In terms of assembly, homotetramer. Requires Mg(2+) as cofactor. Na(+) is required as a cofactor.

It catalyses the reaction Hydrolysis of terminal non-reducing beta-D-galactose residues in beta-D-galactosides.. This chain is Beta-galactosidase, found in Escherichia coli O127:H6 (strain E2348/69 / EPEC).